We begin with the raw amino-acid sequence, 455 residues long: Keratin, type I cuticular Ha5 (455 aa).

Residues 1–97 are head; the sequence is MASKCLKASF…FGEGILTGNE (97 aa). One can recognise an IF rod domain in the interval 97–408; that stretch reads EKETMQSLND…GLLESEDSKL (312 aa). The segment at 98 to 132 is coil 1A; it reads KETMQSLNDRLASYLEKVRQLEQENASLESRIREW. The segment at 133-143 is linker 1; the sequence is CEQQVPYMCPD. The interval 144 to 244 is coil 1B; it reads YQSYFRTMEE…HEEEVNSLRC (101 aa). Residues 245–260 form a linker 12 region; it reads QLGDRLNVEVDAAPPV. The coil 2 stretch occupies residues 261 to 404; it reads DLNRVLDEMR…NTYRGLLESE (144 aa). The tail stretch occupies residues 405 to 455; sequence DSKLPCNPCAPDYSSSKSCLPCLPAVSCSTGAARTTCSPRPVCVPCPGGRF.

It belongs to the intermediate filament family.

The polypeptide is Keratin, type I cuticular Ha5 (Mus musculus (Mouse)).